A 189-amino-acid polypeptide reads, in one-letter code: Glycerol-3-phosphate acyltransferase (189 aa).

5 consecutive transmembrane segments (helical) span residues 1 to 21 (MVWLLAILAYLLGSLSFAVLL), 50 to 70 (KLAILTLLGDVGKGLLPVLVA), 72 to 92 (WLGLGVMEEAWVGIAAVIGHL), 111 to 131 (MLLGLYPPAVLLAAAAWLLTF), and 151 to 171 (LLAWQQPGALLPMTVLTALIV).

Belongs to the PlsY family. Probably interacts with PlsX.

The protein localises to the cell inner membrane. The catalysed reaction is an acyl phosphate + sn-glycerol 3-phosphate = a 1-acyl-sn-glycero-3-phosphate + phosphate. It functions in the pathway lipid metabolism; phospholipid metabolism. In terms of biological role, catalyzes the transfer of an acyl group from acyl-phosphate (acyl-PO(4)) to glycerol-3-phosphate (G3P) to form lysophosphatidic acid (LPA). This enzyme utilizes acyl-phosphate as fatty acyl donor, but not acyl-CoA or acyl-ACP. In Pseudomonas paraeruginosa (strain DSM 24068 / PA7) (Pseudomonas aeruginosa (strain PA7)), this protein is Glycerol-3-phosphate acyltransferase.